The primary structure comprises 341 residues: Thymidine kinase (341 aa).

19 to 26 (GAYGIGKT) is a binding site for ATP. Glu48 (proton acceptor) is an active-site residue. Tyr66 and Gln90 together coordinate substrate. Arg183 lines the ATP pocket. Arg189 lines the substrate pocket.

Belongs to the herpesviridae thymidine kinase family. Homodimer.

It carries out the reaction thymidine + ATP = dTMP + ADP + H(+). Catalyzes the transfer of the gamma-phospho group of ATP to thymidine to generate dTMP in the salvage pathway of pyrimidine synthesis. The dTMP serves as a substrate for DNA polymerase during viral DNA replication. Allows the virus to be reactivated and to grow in non-proliferative cells lacking a high concentration of phosphorylated nucleic acid precursors. The protein is Thymidine kinase of Varicella-zoster virus (strain Oka vaccine) (HHV-3).